The following is a 248-amino-acid chain: 3-deoxy-manno-octulosonate cytidylyltransferase (248 aa).

It belongs to the KdsB family.

It is found in the cytoplasm. It carries out the reaction 3-deoxy-alpha-D-manno-oct-2-ulosonate + CTP = CMP-3-deoxy-beta-D-manno-octulosonate + diphosphate. Its pathway is nucleotide-sugar biosynthesis; CMP-3-deoxy-D-manno-octulosonate biosynthesis; CMP-3-deoxy-D-manno-octulosonate from 3-deoxy-D-manno-octulosonate and CTP: step 1/1. It participates in bacterial outer membrane biogenesis; lipopolysaccharide biosynthesis. Its function is as follows. Activates KDO (a required 8-carbon sugar) for incorporation into bacterial lipopolysaccharide in Gram-negative bacteria. The sequence is that of 3-deoxy-manno-octulosonate cytidylyltransferase from Salmonella typhi.